The primary structure comprises 170 residues: Mediator of RNA polymerase II transcription subunit 10 (170 aa).

Belongs to the Mediator complex subunit 10 family. Component of the Mediator complex.

Its subcellular location is the nucleus. In terms of biological role, component of the Mediator complex, a coactivator involved in the regulated transcription of nearly all RNA polymerase II-dependent genes. Mediator functions as a bridge to convey information from gene-specific regulatory proteins to the basal RNA polymerase II transcription machinery. Mediator is recruited to promoters by direct interactions with regulatory proteins and serves as a scaffold for the assembly of a functional preinitiation complex with RNA polymerase II and the general transcription factors. This Candida albicans (strain SC5314 / ATCC MYA-2876) (Yeast) protein is Mediator of RNA polymerase II transcription subunit 10 (NUT2).